The following is a 588-amino-acid chain: Retrograde regulation protein 2 (588 aa).

Belongs to the GppA/Ppx family.

Required for a novel path of interorganelle communication between mitochondria, peroxisomes and the nucleus, thereby maintaining a functional metabolic interaction between the tricarboxylic acid and glyoxylate cycles. In particular, required for the retrograde expression of the peroxisomal isoform of citrate synthase, CIT2. The protein is Retrograde regulation protein 2 (RTG2) of Saccharomyces cerevisiae (strain ATCC 204508 / S288c) (Baker's yeast).